Here is a 523-residue protein sequence, read N- to C-terminus: 2-isopropylmalate synthase (523 aa).

One can recognise a Pyruvate carboxyltransferase domain in the interval 5–267; sequence VIIFDTTLRD…HTAINHQEIW (263 aa). 4 residues coordinate Mn(2+): Asp-14, His-202, His-204, and Asn-238. The segment at 392–523 is regulatory domain; it reads RLDYFSVQSG…QHNENNKETV (132 aa).

The protein belongs to the alpha-IPM synthase/homocitrate synthase family. LeuA type 1 subfamily. In terms of assembly, homodimer. Mn(2+) serves as cofactor.

Its subcellular location is the cytoplasm. The catalysed reaction is 3-methyl-2-oxobutanoate + acetyl-CoA + H2O = (2S)-2-isopropylmalate + CoA + H(+). It functions in the pathway amino-acid biosynthesis; L-leucine biosynthesis; L-leucine from 3-methyl-2-oxobutanoate: step 1/4. In terms of biological role, catalyzes the condensation of the acetyl group of acetyl-CoA with 3-methyl-2-oxobutanoate (2-ketoisovalerate) to form 3-carboxy-3-hydroxy-4-methylpentanoate (2-isopropylmalate). This chain is 2-isopropylmalate synthase, found in Shigella flexneri.